We begin with the raw amino-acid sequence, 106 residues long: Iron-sulfur cluster assembly protein CyaY (106 aa).

Belongs to the frataxin family.

Involved in iron-sulfur (Fe-S) cluster assembly. May act as a regulator of Fe-S biogenesis. This Salmonella agona (strain SL483) protein is Iron-sulfur cluster assembly protein CyaY.